A 294-amino-acid polypeptide reads, in one-letter code: Probable aspartoacylase (294 aa).

The Zn(2+) site is built by H14 and E17. Substrate is bound by residues R56 and 63-64 (NR). H106 is a Zn(2+) binding site. The substrate site is built by E164 and Y275.

This sequence belongs to the AspA/AstE family. Aspartoacylase subfamily. The cofactor is Zn(2+).

It carries out the reaction an N-acyl-L-aspartate + H2O = a carboxylate + L-aspartate. This is Probable aspartoacylase from Nostoc sp. (strain PCC 7120 / SAG 25.82 / UTEX 2576).